The sequence spans 348 residues: Phosphate acyltransferase (348 aa).

Belongs to the PlsX family. In terms of assembly, homodimer. Probably interacts with PlsY.

It localises to the cytoplasm. It carries out the reaction a fatty acyl-[ACP] + phosphate = an acyl phosphate + holo-[ACP]. It functions in the pathway lipid metabolism; phospholipid metabolism. Catalyzes the reversible formation of acyl-phosphate (acyl-PO(4)) from acyl-[acyl-carrier-protein] (acyl-ACP). This enzyme utilizes acyl-ACP as fatty acyl donor, but not acyl-CoA. This chain is Phosphate acyltransferase, found in Leuconostoc citreum (strain KM20).